The chain runs to 153 residues: Acetylacetone-cleaving enzyme (153 aa).

In terms of assembly, homotetramer. It depends on Fe cation as a cofactor.

The enzyme catalyses acetylacetone + O2 = methylglyoxal + acetate + H(+). It participates in xenobiotic degradation; acetylacetone degradation. Functionally, cleaves acetylacetone to equimolar amounts of methylglyoxal and acetate, consuming one equivalent of molecular oxygen. This Acinetobacter johnsonii protein is Acetylacetone-cleaving enzyme (dke1).